A 422-amino-acid polypeptide reads, in one-letter code: MLDTKFVRANPEAVQEALQKRGANISLDDFLELDRRRRALVVEVESLKAKRNAVSAEIARRKKAKEDAEALIAEMRQVGDQIKALDDELTRIELDMDNRMLYIPNIPHASVPVGTSEEDNVEVRRWGTPRTFDFPVKAHWDIGEDLNILDFQRGAKISGARFTVYKGLGARLERAVINLMMDTHAQRGYTEVLPPYLVNRQSMLGTGQLPKFAEDMFAVAGTDYYLIPTAEVPVTNLYTNEILDADKLPIHHCAYSACFRAEAGAAGRDTRGLIRQHQFNKVELVKFTRPENSYDELEKLTKDAEHILQLLGLPYRVITLCTGDMGFSAAKTYDIEVWLPSFGAYREISSCSNFEDFQARRANIRFRPSPKAKPEFVHTLNGSGLAVGRTVAAILENCQQPDGSVVIPEALRPYMGVDVIGG.

Position 229 to 231 (229 to 231 (TAE)) interacts with L-serine. Position 260 to 262 (260 to 262 (RAE)) interacts with ATP. E283 lines the L-serine pocket. ATP is bound at residue 347 to 350 (EISS). Position 383 (S383) interacts with L-serine.

This sequence belongs to the class-II aminoacyl-tRNA synthetase family. Type-1 seryl-tRNA synthetase subfamily. Homodimer. The tRNA molecule binds across the dimer.

Its subcellular location is the cytoplasm. It catalyses the reaction tRNA(Ser) + L-serine + ATP = L-seryl-tRNA(Ser) + AMP + diphosphate + H(+). The enzyme catalyses tRNA(Sec) + L-serine + ATP = L-seryl-tRNA(Sec) + AMP + diphosphate + H(+). Its pathway is aminoacyl-tRNA biosynthesis; selenocysteinyl-tRNA(Sec) biosynthesis; L-seryl-tRNA(Sec) from L-serine and tRNA(Sec): step 1/1. Its function is as follows. Catalyzes the attachment of serine to tRNA(Ser). Is also able to aminoacylate tRNA(Sec) with serine, to form the misacylated tRNA L-seryl-tRNA(Sec), which will be further converted into selenocysteinyl-tRNA(Sec). The polypeptide is Serine--tRNA ligase (Heliobacterium modesticaldum (strain ATCC 51547 / Ice1)).